We begin with the raw amino-acid sequence, 321 residues long: Glycerol-3-phosphate dehydrogenase [NAD(P)+] (321 aa).

The NADPH site is built by serine 14, phenylalanine 15, arginine 35, and lysine 109. Lysine 109 and glycine 137 together coordinate sn-glycerol 3-phosphate. NADPH is bound at residue alanine 141. Sn-glycerol 3-phosphate is bound by residues lysine 192, aspartate 252, serine 262, arginine 263, and asparagine 264. Residue lysine 192 is the Proton acceptor of the active site. NADPH is bound at residue arginine 263. Positions 287 and 289 each coordinate NADPH.

This sequence belongs to the NAD-dependent glycerol-3-phosphate dehydrogenase family.

It localises to the cytoplasm. It catalyses the reaction sn-glycerol 3-phosphate + NAD(+) = dihydroxyacetone phosphate + NADH + H(+). It carries out the reaction sn-glycerol 3-phosphate + NADP(+) = dihydroxyacetone phosphate + NADPH + H(+). Its pathway is membrane lipid metabolism; glycerophospholipid metabolism. In terms of biological role, catalyzes the reduction of the glycolytic intermediate dihydroxyacetone phosphate (DHAP) to sn-glycerol 3-phosphate (G3P), the key precursor for phospholipid synthesis. The chain is Glycerol-3-phosphate dehydrogenase [NAD(P)+] from Rickettsia felis (strain ATCC VR-1525 / URRWXCal2) (Rickettsia azadi).